The chain runs to 736 residues: MFKKTILSFVISAVMVTAASAVENEQPKSNQFWWPNQLDLTPLRNHSDESNPQNSNFDYAEAFEKLDLEAVKKDIDKVLTNSQDWWPADYGHYGPFFIRMAWHAAGTYRTHDGRGGAGGGQQRFDPLNSWPDNVNLDKARRLLWPIKQKYGQSISWADLIALTGNVALESMGFKTYGYAGGREDDWEPDLVYWGPESKFLTDERRDKKGKLKGPLAAVEMGLIYVNPVGPHGNPDPLLAANDIRMSFGRMAMNDEEIVALIAGGHTFGKAHGAKKPTECVGPEPAAAAVEEQGFGWKNRCGTGSGADTTSSGLEGAWTITPTQWTTNYLDNLFTFNWVKTKSPAGAIQWIPDTDTAANLVPDAHDPTKRHAPIMFTTDIAIKEDPKFRAIAESFRKSPDKYELAFAKAWFKLNHRDLGPRSRYLGNEVPKEVLVWQDPIPELNHPVVNDADIAKLKSEILKSGLSVQDLVLTAWASASSYRGTDMRGGANGARINLSPQNEWQVNNPKQLAKVLNKLEKIKDKFNKKSKKAKISLADLIVLGGAAAIEKSVKEAGFNNKVPFTPGRMDASQAMTDVASFGVLESTADGFRNYYSDESNLSPAQMLIDKADLLTLTVPEMTALVGGMRALSANADGSNHGVFTDQPGVLSNDFFVNLLDMSVKWSKKPKSEALYEGYDRKTGKLKWTATPVDLVFGSNTELRAISEFYASKNAEEQFITDFIAAWHKVMVNDRFDIK.

Positions 1–21 (MFKKTILSFVISAVMVTAASA) are cleaved as a signal peptide. The segment at residues 102–224 (WHAAGTYRTH…LAAVEMGLIY (123 aa)) is a cross-link (tryptophyl-tyrosyl-methioninium (Trp-Tyr) (with M-250)). Histidine 103 functions as the Proton acceptor in the catalytic mechanism. Positions 224–250 (YVNPVGPHGNPDPLLAANDIRMSFGRM) form a cross-link, tryptophyl-tyrosyl-methioninium (Tyr-Met) (with W-102). Histidine 265 is a binding site for heme b.

It belongs to the peroxidase family. Peroxidase/catalase subfamily. As to quaternary structure, homodimer or homotetramer. Heme b is required as a cofactor. Formation of the three residue Trp-Tyr-Met cross-link is important for the catalase, but not the peroxidase activity of the enzyme.

The enzyme catalyses H2O2 + AH2 = A + 2 H2O. It carries out the reaction 2 H2O2 = O2 + 2 H2O. Bifunctional enzyme with both catalase and broad-spectrum peroxidase activity. The polypeptide is Catalase-peroxidase (Shewanella woodyi (strain ATCC 51908 / MS32)).